The chain runs to 148 residues: uncharacterized protein (148 aa).

One can recognise an HTH asnC-type domain in the interval 4–65 (LDKVDIQLVK…IPDLDKLGYM (62 aa)). A DNA-binding region (H-T-H motif) is located at residues 23 to 42 (YRELAELMNTTRQRIARRIT).

This is an uncharacterized protein from Pyrococcus abyssi (strain GE5 / Orsay).